The chain runs to 78 residues: Small ribosomal subunit protein bS18 (78 aa).

It belongs to the bacterial ribosomal protein bS18 family. In terms of assembly, part of the 30S ribosomal subunit. Forms a tight heterodimer with protein bS6.

Its function is as follows. Binds as a heterodimer with protein bS6 to the central domain of the 16S rRNA, where it helps stabilize the platform of the 30S subunit. In Ligilactobacillus salivarius (strain UCC118) (Lactobacillus salivarius), this protein is Small ribosomal subunit protein bS18.